The following is a 76-amino-acid chain: Small ribosomal subunit protein bS18 (76 aa).

This sequence belongs to the bacterial ribosomal protein bS18 family. As to quaternary structure, part of the 30S ribosomal subunit. Forms a tight heterodimer with protein bS6.

In terms of biological role, binds as a heterodimer with protein bS6 to the central domain of the 16S rRNA, where it helps stabilize the platform of the 30S subunit. The chain is Small ribosomal subunit protein bS18 from Symbiobacterium thermophilum (strain DSM 24528 / JCM 14929 / IAM 14863 / T).